The sequence spans 489 residues: Aklavinone 12-hydroxylase DnrF (489 aa).

FAD is bound by residues 17-18, E37, Q121, and L145; that span reads LG. The active-site Proton acceptor is the Y224. D308 is an FAD binding site. Position 317 (G317) interacts with aklavinone. Residues 402-428 form a disordered region; sequence VAAEDDDPEPTEDPRRPSGRPGFRAPH.

Belongs to the PheA/TfdB FAD monooxygenase family. As to quaternary structure, monomer. FAD serves as cofactor.

It carries out the reaction aklavinone + NADPH + O2 + H(+) = epsilon-rhodomycinone + NADP(+) + H2O. It functions in the pathway antibiotic biosynthesis; daunorubicin biosynthesis. The protein operates within antibiotic biosynthesis; carminomycin biosynthesis. Its pathway is antibiotic biosynthesis; rhodomycin biosynthesis. It participates in antibiotic biosynthesis; doxorubicin biosynthesis. Its function is as follows. Involved in the biosynthesis of the anthracyclines carminomycin, rhodomycin, daunorubicin (daunomycin) and doxorubicin (adriamycin) which are aromatic polyketide antibiotics that exhibit high cytotoxicity and are widely applied in the chemotherapy of a variety of cancers. Catalyzes the incorporation of a hydroxyl group at position C-11 of aklavinone, resulting in epsilon-rhodomycinone. The chain is Aklavinone 12-hydroxylase DnrF (dnrF) from Streptomyces peucetius subsp. caesius.